The chain runs to 374 residues: Tomoregulin-2 (374 aa).

Positions 1 to 40 (MVLWESPRQCSSWTLCEGFCWLLLLPVMLLIVARPVKLAA) are cleaved as a signal peptide. The Extracellular segment spans residues 41-320 (FPTSLSDCQT…VPGPVRFQYV (280 aa)). Kazal-like domains lie at 90–137 (VCQF…SCAT) and 181–229 (VCNI…RCQD). Disulfide bonds link Cys-91/Cys-121, Cys-95/Cys-114, Cys-103/Cys-135, Cys-182/Cys-213, Cys-186/Cys-206, and Cys-195/Cys-227. Residue Asn-204 is glycosylated (N-linked (GlcNAc...) (complex) asparagine; atypical). Asn-230 is a glycosylation site (N-linked (GlcNAc...) asparagine). In terms of domain architecture, EGF-like spans 261–301 (HHIPCPEHYNGFCMHGKCEHSINMQEPSCRCDAGYTGQHCE). 3 cysteine pairs are disulfide-bonded: Cys-265/Cys-278, Cys-273/Cys-289, and Cys-291/Cys-300. The required for shedding stretch occupies residues 303-320 (KDYSVLYVVPGPVRFQYV). A helical membrane pass occupies residues 321-341 (LIAAVIGTIQIAVICVVVLCI). At 342–374 (TRKCPRSNRIHRQKQNTGHYSSDNTTRASTRLI) the chain is on the cytoplasmic side. Positions 353-374 (RQKQNTGHYSSDNTTRASTRLI) are disordered. Residues 356 to 374 (QNTGHYSSDNTTRASTRLI) are compositionally biased toward polar residues.

It belongs to the tomoregulin family. O-glycosylated; contains chondroitin sulfate glycosaminoglycans. In terms of processing, a soluble form (TMEFF2-ECD) is produced by proteolytic shedding. This shedding can be induced by phorbol ester or pro-inflammatory cytokines such as TNFalpha, and is mediated by ADAM17. In terms of tissue distribution, highly expressed in adult and fetal brain, spinal cord and prostate. Expressed in all brain regions except the pituitary gland, with highest levels in amygdala and corpus callosum. Expressed in the pericryptal myofibroblasts and other stromal cells of normal colonic mucosa. Expressed in prostate carcinoma. Down-regulated in colorectal cancer. Present in Alzheimer disease plaques (at protein level). Isoform 3 is expressed weakly in testis and at high levels in normal and cancerous prostate.

It localises to the membrane. The protein resides in the secreted. Functionally, may be a survival factor for hippocampal and mesencephalic neurons. The shedded form up-regulates cancer cell proliferation, probably by promoting ERK1/2 phosphorylation. The polypeptide is Tomoregulin-2 (TMEFF2) (Homo sapiens (Human)).